Here is a 336-residue protein sequence, read N- to C-terminus: Anthranilate phosphoribosyltransferase (336 aa).

5-phospho-alpha-D-ribose 1-diphosphate-binding positions include Gly80, 83–84 (GD), Thr88, 90–93 (NIST), 108–116 (KHGNRSITS), and Ser120. Gly80 is a binding site for anthranilate. Ser92 serves as a coordination point for Mg(2+). Asn111 provides a ligand contact to anthranilate. Position 166 (Arg166) interacts with anthranilate. The Mg(2+) site is built by Asp224 and Glu225.

It belongs to the anthranilate phosphoribosyltransferase family. As to quaternary structure, homodimer. Requires Mg(2+) as cofactor.

The catalysed reaction is N-(5-phospho-beta-D-ribosyl)anthranilate + diphosphate = 5-phospho-alpha-D-ribose 1-diphosphate + anthranilate. The protein operates within amino-acid biosynthesis; L-tryptophan biosynthesis; L-tryptophan from chorismate: step 2/5. Its function is as follows. Catalyzes the transfer of the phosphoribosyl group of 5-phosphorylribose-1-pyrophosphate (PRPP) to anthranilate to yield N-(5'-phosphoribosyl)-anthranilate (PRA). The sequence is that of Anthranilate phosphoribosyltransferase from Caldicellulosiruptor saccharolyticus (strain ATCC 43494 / DSM 8903 / Tp8T 6331).